Reading from the N-terminus, the 352-residue chain is Sperm equatorial segment protein 1 (352 aa).

The N-terminal stretch at 1–19 (MKSLVLLVALLLWSSSVPA) is a signal peptide. Residue Asn128 is glycosylated (N-linked (GlcNAc...) asparagine). A disordered region spans residues 140-203 (IEKEEPEPEP…TESEDVPQLS (64 aa)). Residues 166–193 (TESSTSPYVTSYKSPVTTSDRSTGIEIS) are compositionally biased toward polar residues.

The protein belongs to the SPESP1 family. Post-translationally, glycosylated. In testis there are two predominant forms of 77- and 67-kDa and a form of 47-kDa, whereas in epididymal sperm from caput, corpus, and cauda there are two forms of 47- and 43-kDa. Testis forms contain complex carbohydrate residues. Epididymal sperm forms are N-glycosylated. Then undergoes significant glycosylation in the testis and that the majority of these glycoconjugates are removed by the time sperm reach the caput epididymis.

The protein resides in the cytoplasmic vesicle. It localises to the secretory vesicle. Its subcellular location is the acrosome. Functionally, involved in fertilization ability of sperm. This Macaca fascicularis (Crab-eating macaque) protein is Sperm equatorial segment protein 1.